The sequence spans 168 residues: Large ribosomal subunit protein uL11 (168 aa).

This sequence belongs to the universal ribosomal protein uL11 family. As to quaternary structure, part of the ribosomal stalk of the 50S ribosomal subunit. Interacts with L10 and the large rRNA to form the base of the stalk. L10 forms an elongated spine to which L12 dimers bind in a sequential fashion forming a multimeric L10(L12)X complex.

In terms of biological role, forms part of the ribosomal stalk which helps the ribosome interact with GTP-bound translation factors. The polypeptide is Large ribosomal subunit protein uL11 (Metallosphaera sedula (strain ATCC 51363 / DSM 5348 / JCM 9185 / NBRC 15509 / TH2)).